A 955-amino-acid polypeptide reads, in one-letter code: Histone deacetylase 6 (955 aa).

Histone deacetylase stretches follow at residues 15–337 (TLIG…YAPF) and 425–749 (METL…VLQN). H146 (1) is an active-site residue. H561 functions as the 2 in the catalytic mechanism. Positions 815 to 840 (SIDMADQSSSSGSSSSSTRPSHNLEI) are disordered. Residues 818–831 (MADQSSSSGSSSSS) show a composition bias toward low complexity. A UBP-type zinc finger spans residues 853 to 951 (ATCPHLKEVK…SAAHESKFGE (99 aa)). Positions 855, 857, 875, 878, 887, 890, and 895 each coordinate Zn(2+). The tract at residues 896–898 (GRF) is ubiquitin binding. Residues H902, H906, H912, C925, and C928 each coordinate Zn(2+). Positions 924-931 (WCYPCDSY) are ubiquitin binding.

This sequence belongs to the histone deacetylase family. HD type 2 subfamily. Zn(2+) is required as a cofactor.

It is found in the nucleus. It catalyses the reaction N(6)-acetyl-L-lysyl-[histone] + H2O = L-lysyl-[histone] + acetate. In terms of biological role, probable histone deacetylase. Histone deacetylases are responsible for the deacetylation of lysine residues on the N-terminal part of the core histones (H2A, H2B, H3 and H4). Histone deacetylation gives a tag for epigenetic repression and plays an important role in transcriptional regulation, cell cycle progression and developmental events. Histone deacetylases act via the formation of large multiprotein complexes. The sequence is that of Histone deacetylase 6 (hda-6) from Caenorhabditis elegans.